A 484-amino-acid chain; its full sequence is Falcipain-2a (484 aa).

The Cytoplasmic portion of the chain corresponds to 1–35 (MDYNMDYAPHEVISQQGERFVDKYVDRKILKNKKS). Positions 1–243 (MDYNMDYAPH…PLKNSKYLLD (243 aa)) are cleaved as a propeptide — activation peptide. The short motif at 16 to 25 (QGERFVDKYV) is the Bipartite vacuolar targeting signal 1 element. Residues 36-56 (LLVIISLSVLSVVGFVLFYFT) traverse the membrane as a helical; Signal-anchor for type II membrane protein segment. Over 57–484 (PNSRKSDLFK…GTDAFIPLIE (428 aa)) the chain is Lumenal. N67 carries an N-linked (GlcNAc...) asparagine glycan. Residues 84–105 (KSPNGKKFIVSKIDEALSFYDS) carry the Bipartite vacuolar targeting signal 2 motif. Residues 244–260 (QMNYEEVIKKYKGNENF) carry the Nose motif; required for the correct folding of the mature form motif. 4 cysteine pairs are disulfide-bonded: C282/C323, C316/C357, C342/C362, and C411/C472. C285 is an active-site residue. H417 is a catalytic residue. An Arm motif; binds to host hemoglobin and required for the inhibitory interaction between the propeptide and the catalytic domain motif is present at residues 428-437 (EIVNPLTKKG). N447 is an active-site residue.

It belongs to the peptidase C1 family. In terms of assembly, component of the hemozoin formation complex (HFC) composed of falcipains FP2A and/or FP2B, plasmepsins PMII, PMIII/HAP and PMIV, heme detoxifying protein HDP and falcilysin FLN. The HFC complex is involved in hemoglobin degradation and detoxification of heme in the food vacuole during the asexual blood stage. In terms of processing, auto-cleaved to remove the propeptide.

The protein localises to the vacuole. The protein resides in the membrane. Inhibited by cysteine protease inhibitor ICP. Inhibited by heme and heme analogs. Cysteine protease which cleaves native host hemoglobin and globin in the food vacuole during the asexual blood stage. The binding to host hemoglobin is pH-sensitive and only occurs at acidic pH. Cleaves ankyrin and protein 4.1, two components of host erythrocyte membrane cytoskeleton required for the stability of the erythrocyte membrane, and thus may be involved in parasite release. Preferentially cleaves substrates which have an arginine or lysine at the P1 position and a leucine or phenylalanine at the P2 position. This chain is Falcipain-2a, found in Plasmodium falciparum (isolate 3D7).